A 226-amino-acid polypeptide reads, in one-letter code: Low-molecular weight cobalt-containing nitrile hydratase subunit beta (226 aa).

Positions 1–22 (MDGIHDLGGRAGLGPIKPESDE) are disordered.

This sequence belongs to the nitrile hydratase subunit beta family. As to quaternary structure, heterodimer of an alpha and a beta chain.

The enzyme catalyses an aliphatic primary amide = an aliphatic nitrile + H2O. Its function is as follows. NHase catalyzes the hydration of various nitrile compounds to the corresponding amides. In Rhodococcus rhodochrous, this protein is Low-molecular weight cobalt-containing nitrile hydratase subunit beta.